The following is a 185-amino-acid chain: Ribosome-recycling factor (185 aa).

This sequence belongs to the RRF family.

The protein resides in the cytoplasm. Functionally, responsible for the release of ribosomes from messenger RNA at the termination of protein biosynthesis. May increase the efficiency of translation by recycling ribosomes from one round of translation to another. This is Ribosome-recycling factor from Histophilus somni (strain 2336) (Haemophilus somnus).